The primary structure comprises 235 residues: Cytidylate kinase (235 aa).

16–24 (GPAASGKST) is an ATP binding site.

It belongs to the cytidylate kinase family. Type 1 subfamily.

It is found in the cytoplasm. The enzyme catalyses CMP + ATP = CDP + ADP. It catalyses the reaction dCMP + ATP = dCDP + ADP. This chain is Cytidylate kinase, found in Chlorobaculum tepidum (strain ATCC 49652 / DSM 12025 / NBRC 103806 / TLS) (Chlorobium tepidum).